A 311-amino-acid polypeptide reads, in one-letter code: DNA replication terminus site-binding protein (311 aa).

This sequence belongs to the Tus family.

Its subcellular location is the cytoplasm. In terms of biological role, trans-acting protein required for termination of DNA replication. Binds to DNA replication terminator sequences (terA to terF) to prevent the passage of replication forks. The termination efficiency will be affected by the affinity of this protein for the terminator sequence. This Yersinia pseudotuberculosis serotype O:1b (strain IP 31758) protein is DNA replication terminus site-binding protein.